The primary structure comprises 339 residues: Methylthioribose-1-phosphate isomerase (339 aa).

Substrate-binding positions include 50–52, Arg-84, and Gln-186; that span reads RGA. The Proton donor role is filled by Asp-227. Substrate is bound at residue 237–238; that stretch reads NK.

This sequence belongs to the eIF-2B alpha/beta/delta subunits family. MtnA subfamily.

The enzyme catalyses 5-(methylsulfanyl)-alpha-D-ribose 1-phosphate = 5-(methylsulfanyl)-D-ribulose 1-phosphate. It functions in the pathway amino-acid biosynthesis; L-methionine biosynthesis via salvage pathway; L-methionine from S-methyl-5-thio-alpha-D-ribose 1-phosphate: step 1/6. Its function is as follows. Catalyzes the interconversion of methylthioribose-1-phosphate (MTR-1-P) into methylthioribulose-1-phosphate (MTRu-1-P). The polypeptide is Methylthioribose-1-phosphate isomerase (Sulfurihydrogenibium sp. (strain YO3AOP1)).